A 317-amino-acid chain; its full sequence is 4-hydroxy-3-methylbut-2-enyl diphosphate reductase (317 aa).

[4Fe-4S] cluster is bound at residue Cys-12. The (2E)-4-hydroxy-3-methylbut-2-enyl diphosphate site is built by His-41 and His-74. Positions 41 and 74 each coordinate dimethylallyl diphosphate. Residues His-41 and His-74 each coordinate isopentenyl diphosphate. [4Fe-4S] cluster is bound at residue Cys-97. His-125 contacts (2E)-4-hydroxy-3-methylbut-2-enyl diphosphate. Residue His-125 participates in dimethylallyl diphosphate binding. His-125 is an isopentenyl diphosphate binding site. Glu-127 acts as the Proton donor in catalysis. A (2E)-4-hydroxy-3-methylbut-2-enyl diphosphate-binding site is contributed by Thr-168. Cys-198 serves as a coordination point for [4Fe-4S] cluster. Positions 226, 227, 228, and 270 each coordinate (2E)-4-hydroxy-3-methylbut-2-enyl diphosphate. 4 residues coordinate dimethylallyl diphosphate: Ser-226, Ser-227, Asn-228, and Ser-270. Residues Ser-226, Ser-227, Asn-228, and Ser-270 each contribute to the isopentenyl diphosphate site.

This sequence belongs to the IspH family. As to quaternary structure, homodimer. The cofactor is [4Fe-4S] cluster.

It carries out the reaction isopentenyl diphosphate + 2 oxidized [2Fe-2S]-[ferredoxin] + H2O = (2E)-4-hydroxy-3-methylbut-2-enyl diphosphate + 2 reduced [2Fe-2S]-[ferredoxin] + 2 H(+). It catalyses the reaction dimethylallyl diphosphate + 2 oxidized [2Fe-2S]-[ferredoxin] + H2O = (2E)-4-hydroxy-3-methylbut-2-enyl diphosphate + 2 reduced [2Fe-2S]-[ferredoxin] + 2 H(+). It participates in isoprenoid biosynthesis; dimethylallyl diphosphate biosynthesis; dimethylallyl diphosphate from (2E)-4-hydroxy-3-methylbutenyl diphosphate: step 1/1. The protein operates within isoprenoid biosynthesis; isopentenyl diphosphate biosynthesis via DXP pathway; isopentenyl diphosphate from 1-deoxy-D-xylulose 5-phosphate: step 6/6. Its function is as follows. Catalyzes the conversion of 1-hydroxy-2-methyl-2-(E)-butenyl 4-diphosphate (HMBPP) into a mixture of isopentenyl diphosphate (IPP) and dimethylallyl diphosphate (DMAPP). Acts in the terminal step of the DOXP/MEP pathway for isoprenoid precursor biosynthesis. This Proteus mirabilis (strain HI4320) protein is 4-hydroxy-3-methylbut-2-enyl diphosphate reductase.